The sequence spans 365 residues: WAT1-related protein At4g01440 (365 aa).

A run of 10 helical transmembrane segments spans residues 8-28 (WTPVIIMVMINSALGLANALV), 40-60 (VIATYRLAISTLFLAPIAFFW), 72-92 (ILVQLFFSALVGASLTQYFFL), 101-121 (TLACAFISMTPAITFVMALIF), 132-152 (AGMGMVMGALICIGGALLLTM), 181-201 (WIIGCVLLFAGSSCFGSWMLI), 213-233 (YSSTVVLSFFGTIQCALLSLI), 249-269 (IVTIVYAGAVAQGICTVGTSW), 277-297 (IFTSIFTPVGLIFATLFDFLI), and 302-322 (IFLGSVVGSGVVIFGLYIFLL). 2 consecutive EamA domains span residues 25-144 (NALV…LICI) and 196-321 (GSWM…YIFL).

This sequence belongs to the drug/metabolite transporter (DMT) superfamily. Plant drug/metabolite exporter (P-DME) (TC 2.A.7.4) family.

The protein localises to the membrane. This chain is WAT1-related protein At4g01440, found in Arabidopsis thaliana (Mouse-ear cress).